The primary structure comprises 232 residues: uncharacterized protein (232 aa).

This is an uncharacterized protein from Thermoproteus tenax (TTV1).